Reading from the N-terminus, the 674-residue chain is Zinc finger protein 750 (674 aa).

Residues Tyr25 to Asn51 form a CCHC-type zinc finger. Residues Cys27, Cys30, His43, and Cys49 each coordinate Zn(2+). Disordered stretches follow at residues Glu105–Val125, Leu370–Ser466, and Thr594–Ser674. 2 stretches are compositionally biased toward polar residues: residues Ser401–Gly411 and Asp444–Ser466.

Its subcellular location is the nucleus. Transcription factor involved in epidermis differentiation. The protein is Zinc finger protein 750 (znf750) of Xenopus laevis (African clawed frog).